The following is a 42-amino-acid chain: Cytochrome b6-f complex subunit 7 (42 aa).

The helical transmembrane segment at 19–37 threads the bilayer; sequence AVVCFSMTLFGLSLGFGLL.

The protein belongs to the PetM family. The 4 large subunits of the cytochrome b6-f complex are cytochrome b6, subunit IV (17 kDa polypeptide, PetD), cytochrome f and the Rieske protein, while the 4 small subunits are PetG, PetL, PetM and PetN. The complex functions as a dimer.

Its subcellular location is the plastid. The protein resides in the chloroplast thylakoid membrane. Functionally, component of the cytochrome b6-f complex, which mediates electron transfer between photosystem II (PSII) and photosystem I (PSI), cyclic electron flow around PSI, and state transitions. The protein is Cytochrome b6-f complex subunit 7 of Phaeodactylum tricornutum (strain CCAP 1055/1).